The sequence spans 3078 residues: Homeobox-like protein HDP1 (3078 aa).

Disordered regions lie at residues methionine 1 to asparagine 29, leucine 59 to asparagine 164, serine 203 to lysine 306, asparagine 949 to asparagine 980, aspartate 1323 to lysine 1390, serine 1415 to asparagine 1445, lysine 1939 to phenylalanine 2046, threonine 2115 to tyrosine 2216, alanine 2599 to isoleucine 2637, and glutamine 2959 to proline 3019. Polar residues predominate over residues cysteine 14 to asparagine 29. Residues leucine 59–isoleucine 84 show a composition bias toward basic and acidic residues. Composition is skewed to low complexity over residues asparagine 85–asparagine 94 and asparagine 114–asparagine 127. Composition is skewed to polar residues over residues isoleucine 128 to threonine 137, lysine 148 to histidine 157, asparagine 209 to threonine 229, threonine 237 to histidine 252, and asparagine 949 to histidine 960. Residues arginine 1368 to histidine 1380 show a composition bias toward basic residues. Residues serine 1415–serine 1433 are compositionally biased toward low complexity. A compositionally biased stretch (polar residues) spans threonine 1434–asparagine 1445. The segment covering lysine 1939–asparagine 1993 has biased composition (low complexity). Composition is skewed to basic and acidic residues over residues lysine 2012–leucine 2021 and tyrosine 2029–phenylalanine 2046. Residues threonine 2115–asparagine 2126 show a composition bias toward polar residues. Low complexity predominate over residues methionine 2139–valine 2160. Residues aspartate 2163–glutamate 2177 show a composition bias toward basic and acidic residues. Acidic residues predominate over residues asparagine 2192–aspartate 2201. Low complexity-rich tracts occupy residues asparagine 2202–tyrosine 2216, asparagine 2602–aspartate 2630, and glutamine 2959–asparagine 2989. The span at leucine 2990–isoleucine 3006 shows a compositional bias: polar residues. A DNA-binding region spans residues serine 2991–lysine 3078.

In terms of assembly, homodimer.

The protein localises to the nucleus. It localises to the chromosome. Transcriptional regulator which binds to the DNA motifs 5'-GTGCACAC-3' (motif A) and 5'-[GTA]TGTA[CT][GA]TAC-3' (motif B) of genes essential for early gametocyte development, including those critical for the expansion of the inner membrane complex (IMC). In Plasmodium falciparum (isolate NF54), this protein is Homeobox-like protein HDP1.